The following is a 472-amino-acid chain: MAGKTLYDKLWDDHLVKQRDDGSALIYIDRQLLHEVTSPQAFEGLRLAGRKPWRIDANIATPDHNVPTTDRDKGIDGIVDPVSRTQVETLDKNCDEFGILEFKIKDQRQGIVHVIGPEQGATLPGMSIVCGDSHTSTHGAFGCLAHGIGTSEVEHVLATQCLVQKKMKNMLVKVNGKLGAGVTGKDVVLAIIGKIGTAGGTGYAIEFGGEAIRGLSMEGRMTICNMSIEAGARVGMVAVDDTTIEYVKGRPFSPKGETWDKAVEYWRTLHSDDDAVFDKVVELDGSAIQPQVSWGTSPEMVVGVEGAVPDPAKEEDPIKREGIVRALKYMGLQPNQKITDIKLDRVFIGSCTNSRIEDLREAAAVVKGRKVAASLKQAMVVPGSGLVKAQAEQEGLDKVFIEAGLEWRDPGCSMCLAMNADKLGQGEHCASTSNRNFEGRQGFGGRTHLVSPAMAAAAAVTGHFVDVRELMN.

Positions 351, 412, and 415 each coordinate [4Fe-4S] cluster.

The protein belongs to the aconitase/IPM isomerase family. LeuC type 1 subfamily. In terms of assembly, heterodimer of LeuC and LeuD. It depends on [4Fe-4S] cluster as a cofactor.

It catalyses the reaction (2R,3S)-3-isopropylmalate = (2S)-2-isopropylmalate. The protein operates within amino-acid biosynthesis; L-leucine biosynthesis; L-leucine from 3-methyl-2-oxobutanoate: step 2/4. Functionally, catalyzes the isomerization between 2-isopropylmalate and 3-isopropylmalate, via the formation of 2-isopropylmaleate. In Marinobacter nauticus (strain ATCC 700491 / DSM 11845 / VT8) (Marinobacter aquaeolei), this protein is 3-isopropylmalate dehydratase large subunit.